The chain runs to 439 residues: Transcription factor pydF (439 aa).

The segment covering 1 to 18 has biased composition (basic and acidic residues); sequence MGRPQRADKQRRETDGPQ. 3 disordered regions span residues 1 to 53, 143 to 177, and 239 to 262; these read MGRP…GYAR, HVEKATAERPGNDGSSSPSSSLLRTSSSPSQQAVE, and AFRDGQNNGTSRPNTAASQNMQQH. Over residues 20-35 the composition is skewed to polar residues; it reads SRPSLTQAQKNSTTIR. Residues 143-153 show a composition bias toward basic and acidic residues; sequence HVEKATAERPG. The segment covering 157–172 has biased composition (low complexity); sequence SSSPSSSLLRTSSSPS. Residues 243–260 show a composition bias toward polar residues; it reads GQNNGTSRPNTAASQNMQ.

The protein localises to the nucleus. Functionally, transcription factor; part of the gene cluster that mediates the biosynthesis of pyrrocidines, fungal natural products containing a macrocyclic para-cyclophane connected to a decahydrofluorene ring system that show potent antibiotic activities toward Gram-negative bacteria. The polypeptide is Transcription factor pydF (Acremonium sp).